The chain runs to 185 residues: Elongation factor P (185 aa).

This sequence belongs to the elongation factor P family.

The protein resides in the cytoplasm. The protein operates within protein biosynthesis; polypeptide chain elongation. Its function is as follows. Involved in peptide bond synthesis. Stimulates efficient translation and peptide-bond synthesis on native or reconstituted 70S ribosomes in vitro. Probably functions indirectly by altering the affinity of the ribosome for aminoacyl-tRNA, thus increasing their reactivity as acceptors for peptidyl transferase. In Desulforudis audaxviator (strain MP104C), this protein is Elongation factor P.